The chain runs to 323 residues: Fructose-1,6-bisphosphatase class 1 (323 aa).

4 residues coordinate Mg(2+): glutamate 93, aspartate 114, leucine 116, and aspartate 117. Residues 117 to 120 (DGSS), asparagine 205, tyrosine 233, and lysine 263 each bind substrate. A Mg(2+)-binding site is contributed by glutamate 269.

It belongs to the FBPase class 1 family. Homotetramer. It depends on Mg(2+) as a cofactor.

It localises to the cytoplasm. It catalyses the reaction beta-D-fructose 1,6-bisphosphate + H2O = beta-D-fructose 6-phosphate + phosphate. The protein operates within carbohydrate biosynthesis; gluconeogenesis. The chain is Fructose-1,6-bisphosphatase class 1 from Sulfurihydrogenibium sp. (strain YO3AOP1).